The primary structure comprises 337 residues: Casein kinase II subunit alpha (337 aa).

Residues 47 to 332 form the Protein kinase domain; it reads YEIIRKIGRG…TREAMEHPYF (286 aa). Residues 53–61 and K76 each bind ATP; that span reads IGRGKYSEV. The active-site Proton acceptor is the D164.

This sequence belongs to the protein kinase superfamily. CMGC Ser/Thr protein kinase family. CK2 subfamily. In terms of assembly, tetramer of two alpha and two beta chains.

The enzyme catalyses L-seryl-[protein] + ATP = O-phospho-L-seryl-[protein] + ADP + H(+). The catalysed reaction is L-threonyl-[protein] + ATP = O-phospho-L-threonyl-[protein] + ADP + H(+). In terms of biological role, casein kinases are operationally defined by their preferential utilization of acidic proteins such as caseins as substrates. The alpha chain contains the catalytic site. The sequence is that of Casein kinase II subunit alpha (casK) from Dictyostelium discoideum (Social amoeba).